The sequence spans 65 residues: Large ribosomal subunit protein bL32 (65 aa).

It belongs to the bacterial ribosomal protein bL32 family.

The protein is Large ribosomal subunit protein bL32 of Metamycoplasma arthritidis (strain 158L3-1) (Mycoplasma arthritidis).